A 206-amino-acid chain; its full sequence is Glutathione S-transferase 1 (206 aa).

Residues 2 to 79 (PQYKLTYFDI…YLGRQFGLAG (78 aa)) form the GST N-terminal domain. Glutathione-binding positions include Y8, W39, K43, 49 to 51 (GQL), and 63 to 64 (QS). The GST C-terminal domain occupies 81–206 (TPMEEAQVDS…WIAERPKTPY (126 aa)).

The protein belongs to the GST superfamily. Sigma family.

The enzyme catalyses RX + glutathione = an S-substituted glutathione + a halide anion + H(+). Conjugation of reduced glutathione to a wide number of exogenous and endogenous hydrophobic electrophiles. Can also function as a GSH peroxidase. The sequence is that of Glutathione S-transferase 1 (GST1) from Ascaris suum (Pig roundworm).